A 312-amino-acid chain; its full sequence is DnaJ homolog subfamily B member 7 (312 aa).

In terms of domain architecture, J spans 3 to 69 (DYYEVLGVQR…EKRDIYDKYG (67 aa)). Residues 272–312 (SWVTNKKEPSIFSAGFKEGGRRKKKKHKEGQKKKKSNKRNH) form a disordered region. Over residues 291-312 (GRRKKKKHKEGQKKKKSNKRNH) the composition is skewed to basic residues.

Its function is as follows. Probably acts as a co-chaperone. The chain is DnaJ homolog subfamily B member 7 (Dnajb7) from Mus musculus (Mouse).